A 372-amino-acid chain; its full sequence is NADH-quinone oxidoreductase subunit D (372 aa).

It belongs to the complex I 49 kDa subunit family. As to quaternary structure, NDH-1 is composed of 14 different subunits. Subunits NuoB, C, D, E, F, and G constitute the peripheral sector of the complex.

Its subcellular location is the cell inner membrane. It catalyses the reaction a quinone + NADH + 5 H(+)(in) = a quinol + NAD(+) + 4 H(+)(out). In terms of biological role, NDH-1 shuttles electrons from NADH, via FMN and iron-sulfur (Fe-S) centers, to quinones in the respiratory chain. The immediate electron acceptor for the enzyme in this species is believed to be ubiquinone. Couples the redox reaction to proton translocation (for every two electrons transferred, four hydrogen ions are translocated across the cytoplasmic membrane), and thus conserves the redox energy in a proton gradient. The polypeptide is NADH-quinone oxidoreductase subunit D (Desulfotalea psychrophila (strain LSv54 / DSM 12343)).